Consider the following 358-residue polypeptide: tRNA-specific 2-thiouridylase MnmA (358 aa).

ATP-binding positions include 6–13 (ALSGGVDS) and Met-32. The active-site Nucleophile is Cys-103. Cys-103 and Cys-201 are joined by a disulfide. Gly-127 contributes to the ATP binding site. An interaction with tRNA region spans residues 151–153 (KDQ). The active-site Cysteine persulfide intermediate is the Cys-201.

Belongs to the MnmA/TRMU family.

Its subcellular location is the cytoplasm. The catalysed reaction is S-sulfanyl-L-cysteinyl-[protein] + uridine(34) in tRNA + AH2 + ATP = 2-thiouridine(34) in tRNA + L-cysteinyl-[protein] + A + AMP + diphosphate + H(+). Catalyzes the 2-thiolation of uridine at the wobble position (U34) of tRNA, leading to the formation of s(2)U34. The protein is tRNA-specific 2-thiouridylase MnmA of Thermotoga sp. (strain RQ2).